The sequence spans 682 residues: Penicillin-binding protein activator LpoA (682 aa).

The signal sequence occupies residues 1 to 26; the sequence is MLPLNSVRTHAGRLVPVMLAALFLAG. Residue Cys-27 is the site of N-palmitoyl cysteine attachment. Residue Cys-27 is the site of S-diacylglycerol cysteine attachment. 2 disordered regions span residues 240 to 262 and 314 to 341; these read AKQL…TGET and ANNA…VSPT. The span at 248–262 shows a compositional bias: low complexity; it reads GGTPPAAAAPTTGET.

This sequence belongs to the LpoA family. In terms of assembly, interacts with PBP1a.

Its subcellular location is the cell outer membrane. Its function is as follows. Regulator of peptidoglycan synthesis that is essential for the function of penicillin-binding protein 1A (PBP1a). The chain is Penicillin-binding protein activator LpoA from Dickeya chrysanthemi (strain Ech1591) (Dickeya zeae (strain Ech1591)).